Consider the following 75-residue polypeptide: Large ribosomal subunit protein uL29 (75 aa).

This sequence belongs to the universal ribosomal protein uL29 family.

The sequence is that of Large ribosomal subunit protein uL29 from Pyrobaculum aerophilum (strain ATCC 51768 / DSM 7523 / JCM 9630 / CIP 104966 / NBRC 100827 / IM2).